We begin with the raw amino-acid sequence, 169 residues long: Lipoprotein signal peptidase (169 aa).

At 1–9 the chain is on the cytoplasmic side; it reads MPDVDRFGR. A helical membrane pass occupies residues 10 to 30; it reads LPWLWITVLVFVLDQVSKAFF. The Periplasmic portion of the chain corresponds to 31 to 67; that stretch reads QAELSMYQQIVVIPDLFSWTLAYNTGAAFSFLADSSG. A helical membrane pass occupies residues 68–89; that stretch reads WQRWLFALIAIVVSASLVVWLK. Residues 90 to 96 are Cytoplasmic-facing; sequence RLKKGET. A helical membrane pass occupies residues 97–118; sequence WLAIALALVLGGALGNLYDRMV. Topologically, residues 119 to 140 are periplasmic; sequence LGHVVDFILVHWQNRWYFPAFN. Catalysis depends on residues aspartate 124 and aspartate 143. A helical membrane pass occupies residues 141 to 154; sequence LADSAITVGAVMLA. The Cytoplasmic portion of the chain corresponds to 155–169; sequence LDMFRSKKSGEAAHG.

It belongs to the peptidase A8 family. As to quaternary structure, monomer in the crystal.

The protein resides in the cell inner membrane. The catalysed reaction is Release of signal peptides from bacterial membrane prolipoproteins. Hydrolyzes -Xaa-Yaa-Zaa-|-(S,diacylglyceryl)Cys-, in which Xaa is hydrophobic (preferably Leu), and Yaa (Ala or Ser) and Zaa (Gly or Ala) have small, neutral side chains.. It participates in protein modification; lipoprotein biosynthesis (signal peptide cleavage). Inhibited by globomycin. This protein specifically catalyzes the removal of signal peptides from prolipoproteins. This Pseudomonas aeruginosa (strain ATCC 15692 / DSM 22644 / CIP 104116 / JCM 14847 / LMG 12228 / 1C / PRS 101 / PAO1) protein is Lipoprotein signal peptidase.